The chain runs to 441 residues: Ribulose bisphosphate carboxylase large chain (441 aa).

Position 5 is an N6,N6,N6-trimethyllysine (lysine 5). Asparagine 114 and threonine 164 together coordinate substrate. Catalysis depends on lysine 166, which acts as the Proton acceptor. Residue lysine 168 participates in substrate binding. Residues lysine 192, aspartate 194, and glutamate 195 each coordinate Mg(2+). At lysine 192 the chain carries N6-carboxylysine. The active-site Proton acceptor is histidine 285. Substrate-binding residues include arginine 286, histidine 318, and serine 370.

The protein belongs to the RuBisCO large chain family. Type I subfamily. As to quaternary structure, heterohexadecamer of 8 large chains and 8 small chains; disulfide-linked. The disulfide link is formed within the large subunit homodimers. Requires Mg(2+) as cofactor. The disulfide bond which can form in the large chain dimeric partners within the hexadecamer appears to be associated with oxidative stress and protein turnover.

The protein localises to the plastid. It localises to the chloroplast. The enzyme catalyses 2 (2R)-3-phosphoglycerate + 2 H(+) = D-ribulose 1,5-bisphosphate + CO2 + H2O. It carries out the reaction D-ribulose 1,5-bisphosphate + O2 = 2-phosphoglycolate + (2R)-3-phosphoglycerate + 2 H(+). In terms of biological role, ruBisCO catalyzes two reactions: the carboxylation of D-ribulose 1,5-bisphosphate, the primary event in carbon dioxide fixation, as well as the oxidative fragmentation of the pentose substrate in the photorespiration process. Both reactions occur simultaneously and in competition at the same active site. The polypeptide is Ribulose bisphosphate carboxylase large chain (Pellaea rotundifolia (Button fern)).